Here is a 502-residue protein sequence, read N- to C-terminus: Ubiquitin-associated protein 1 (502 aa).

The segment at 1 to 95 (MASKKLGTDV…AEAKVNSKSG (95 aa)) is interaction with ESCRT-I. One can recognise a UMA domain in the interval 17–63 (LDDVPFKIGDKFKTPAKVGLPIGFSLPDCLQVVREMQYDFSLEKKTI). A compositionally biased stretch (basic and acidic residues) spans 80-100 (ERKAEEAEAKVNSKSGPEGDS). Disordered regions lie at residues 80–117 (ERKAEEAEAKVNSKSGPEGDSKVSFPKTHNTATMPPPI) and 135–156 (VSSSATKQKVLSPPHTKADFNP). Phosphoserine occurs at positions 146, 205, and 289. Positions 260-290 (VSNIKSLSFPKLDSDDSNQKTVKLASTFHST) are interaction with PTPN23. 2 consecutive UBA domains span residues 389 to 430 (SPSE…LFAH) and 451 to 498 (QCSE…LMAR).

In terms of assembly, component of an ESCRT-I complex (endosomal sorting complex required for transport I) which consists of TSG101, VPS28, VPS37A and UBAP1 in a 1:1:1:1 stoichiometry. Interacts with PTPN23. Interacts (via UBA domains) with ubiquitinated proteins. In terms of tissue distribution, ubiquitous. Highly expressed in heart, liver, brain, kidney, spleen, skeletal muscle, stomach, testis and lung.

The protein localises to the cytoplasm. The protein resides in the cytosol. It localises to the endosome. In terms of biological role, component of the ESCRT-I complex, a regulator of vesicular trafficking process. Binds to ubiquitinated cargo proteins and is required for the sorting of endocytic ubiquitinated cargos into multivesicular bodies (MVBs). Plays a role in the proteasomal degradation of ubiquitinated cell-surface proteins, such as EGFR and BST2. This Mus musculus (Mouse) protein is Ubiquitin-associated protein 1.